We begin with the raw amino-acid sequence, 107 residues long: uncharacterized protein (107 aa).

The span at 1–14 (MTERNASGRMNTKG) shows a compositional bias: polar residues. The tract at residues 1-20 (MTERNASGRMNTKGRSIKET) is disordered.

The protein localises to the mitochondrion. This is an uncharacterized protein from Arabidopsis thaliana (Mouse-ear cress).